A 202-amino-acid chain; its full sequence is CASP-like protein 2B1 (202 aa).

Topologically, residues 1–29 (MSYLGVGVSPGNVPVYHGTNSKVIDRRVR) are cytoplasmic. The helical transmembrane segment at 30–50 (LAELVLRCVICCLGVLAAVLV) threads the bilayer. At 51–72 (GTDTQVKEIFSIQKKARFTDMK) the chain is on the extracellular side. The helical transmembrane segment at 73–93 (ALVFLVAANGIAAAYSFVQGV) threads the bilayer. Residues 94–109 (RCVVGMVKGSVLFSKP) lie on the Cytoplasmic side of the membrane. The helical transmembrane segment at 110 to 132 (LAWVIFSGDQMMAYLTMSAVAAA) threads the bilayer. Topologically, residues 133–164 (AQSSVFAKLGQPDLQWMKICTMYGKFCNQVGE) are extracellular. The chain crosses the membrane as a helical span at residues 165–185 (GIASALLVSVSMVVLSCISAF). At 186 to 202 (SLFRLYGGNKGKDGARW) the chain is on the cytoplasmic side.

It belongs to the Casparian strip membrane proteins (CASP) family. In terms of assembly, homodimer and heterodimers.

It localises to the cell membrane. This Populus trichocarpa (Western balsam poplar) protein is CASP-like protein 2B1.